Here is an 89-residue protein sequence, read N- to C-terminus: MVKKSKVGSTGRFGARYGRKAKRTVKDIEDKMHAKHVCPKCDRPGVKRTHAGIWKCRKCGAVFTGGAYIPTTPMGKVAKRNIKRITGGE.

Residues 1–28 form a disordered region; sequence MVKKSKVGSTGRFGARYGRKAKRTVKDI. The segment at 38-59 adopts a C4-type zinc-finger fold; it reads CPKCDRPGVKRTHAGIWKCRKC.

It belongs to the eukaryotic ribosomal protein eL43 family. It depends on Zn(2+) as a cofactor.

The chain is Large ribosomal subunit protein eL43 from Methanosphaera stadtmanae (strain ATCC 43021 / DSM 3091 / JCM 11832 / MCB-3).